The sequence spans 124 residues: Large ribosomal subunit protein bL12 (124 aa).

Belongs to the bacterial ribosomal protein bL12 family. As to quaternary structure, homodimer. Part of the ribosomal stalk of the 50S ribosomal subunit. Forms a multimeric L10(L12)X complex, where L10 forms an elongated spine to which 2 to 4 L12 dimers bind in a sequential fashion. Binds GTP-bound translation factors.

Its function is as follows. Forms part of the ribosomal stalk which helps the ribosome interact with GTP-bound translation factors. Is thus essential for accurate translation. This chain is Large ribosomal subunit protein bL12, found in Xanthobacter autotrophicus (strain ATCC BAA-1158 / Py2).